A 71-amino-acid polypeptide reads, in one-letter code: ATP synthase subunit c (71 aa).

A run of 2 helical transmembrane segments spans residues 5-25 and 47-67; these read AIGIAAGLAAIGGAIGVAIIV and FIGAPLAEAVPIIAIVIAFLL.

The protein belongs to the ATPase C chain family. F-type ATPases have 2 components, F(1) - the catalytic core - and F(0) - the membrane proton channel. F(1) has five subunits: alpha(3), beta(3), gamma(1), delta(1), epsilon(1). F(0) has three main subunits: a(1), b(2) and c(10-14). The alpha and beta chains form an alternating ring which encloses part of the gamma chain. F(1) is attached to F(0) by a central stalk formed by the gamma and epsilon chains, while a peripheral stalk is formed by the delta and b chains.

It is found in the cell membrane. Functionally, f(1)F(0) ATP synthase produces ATP from ADP in the presence of a proton or sodium gradient. F-type ATPases consist of two structural domains, F(1) containing the extramembraneous catalytic core and F(0) containing the membrane proton channel, linked together by a central stalk and a peripheral stalk. During catalysis, ATP synthesis in the catalytic domain of F(1) is coupled via a rotary mechanism of the central stalk subunits to proton translocation. In terms of biological role, key component of the F(0) channel; it plays a direct role in translocation across the membrane. A homomeric c-ring of between 10-14 subunits forms the central stalk rotor element with the F(1) delta and epsilon subunits. The polypeptide is ATP synthase subunit c (Shouchella clausii (strain KSM-K16) (Alkalihalobacillus clausii)).